Reading from the N-terminus, the 324-residue chain is Glyoxylate/hydroxypyruvate reductase B (324 aa).

Catalysis depends on residues R237 and E266. Catalysis depends on H285, which acts as the Proton donor.

This sequence belongs to the D-isomer specific 2-hydroxyacid dehydrogenase family. GhrB subfamily. Homodimer.

It is found in the cytoplasm. It carries out the reaction glycolate + NADP(+) = glyoxylate + NADPH + H(+). The catalysed reaction is (R)-glycerate + NAD(+) = 3-hydroxypyruvate + NADH + H(+). The enzyme catalyses (R)-glycerate + NADP(+) = 3-hydroxypyruvate + NADPH + H(+). In terms of biological role, catalyzes the NADPH-dependent reduction of glyoxylate and hydroxypyruvate into glycolate and glycerate, respectively. This Escherichia coli O17:K52:H18 (strain UMN026 / ExPEC) protein is Glyoxylate/hydroxypyruvate reductase B.